The following is a 340-amino-acid chain: Immunoglobulin-binding protein 1 (340 aa).

Residues 47-61 (LELLEKAAGMLSQLD) form the UIM domain. Positions 99–203 (RLDHLQRARE…YLLHLRRWIG (105 aa)) are interaction with PPP2CA. Disordered stretches follow at residues 221 to 242 (DKDS…PPMK) and 281 to 340 (LPDR…QNMG). The segment at 226-291 (REESACQSSL…PDRGIAKPPS (66 aa)) is interaction with MID1. Lys-242 is subject to N6-acetyllysine. A compositionally biased stretch (low complexity) spans 292–301 (ADFQRAAQQQ). Residues 302–312 (EDQEQKDEENE) are compositionally biased toward acidic residues. Over residues 313–330 (EKALHRMREWDDWKDTHP) the composition is skewed to basic and acidic residues.

The protein belongs to the IGBP1/TAP42 family. In terms of assembly, interacts with partially folded PPP2CA, but not with the fully active protein. Interacts with PPP2CB, and with PP4 and PP6. Interacts with MID1 and MID2. Interacts with ubiquitin. Phosphorylated. Post-translationally, monoubiquitination by MID1 triggers calpain-mediated cleavage and switches IGBP1 activity from protective to destructive.

It localises to the cytoplasm. Its function is as follows. Associated to surface IgM-receptor; may be involved in signal transduction. Involved in regulation of the catalytic activity of the phosphatases PP2A, PP4 and PP6 by protecting their partially folded catalytic subunits from degradative polyubiquitination until they associate with regulatory subunits. This chain is Immunoglobulin-binding protein 1 (Igbp1), found in Rattus norvegicus (Rat).